A 227-amino-acid chain; its full sequence is Orotidine 5'-phosphate decarboxylase (227 aa).

Residues D8, K30, D57–T66, T116, R177, Q186, G206, and R207 each bind substrate. Catalysis depends on K59, which acts as the Proton donor.

The protein belongs to the OMP decarboxylase family. Type 1 subfamily. Homodimer.

It catalyses the reaction orotidine 5'-phosphate + H(+) = UMP + CO2. Its pathway is pyrimidine metabolism; UMP biosynthesis via de novo pathway; UMP from orotate: step 2/2. Its function is as follows. Catalyzes the decarboxylation of orotidine 5'-monophosphate (OMP) to uridine 5'-monophosphate (UMP). The chain is Orotidine 5'-phosphate decarboxylase from Acinetobacter baumannii (strain AB307-0294).